A 465-amino-acid chain; its full sequence is Glutamate--tRNA ligase (465 aa).

Positions 8–18 match the 'HIGH' region motif; the sequence is PSPTGHLHIGG. 4 residues coordinate Zn(2+): Cys97, Cys99, Cys124, and Glu126. The 'KMSKS' region signature appears at 234–238; it reads RLSKR. Lys237 contacts ATP.

The protein belongs to the class-I aminoacyl-tRNA synthetase family. Glutamate--tRNA ligase type 1 subfamily. In terms of assembly, monomer. Zn(2+) is required as a cofactor.

The protein localises to the cytoplasm. It carries out the reaction tRNA(Glu) + L-glutamate + ATP = L-glutamyl-tRNA(Glu) + AMP + diphosphate. In terms of biological role, catalyzes the attachment of glutamate to tRNA(Glu) in a two-step reaction: glutamate is first activated by ATP to form Glu-AMP and then transferred to the acceptor end of tRNA(Glu). This Thermodesulfovibrio yellowstonii (strain ATCC 51303 / DSM 11347 / YP87) protein is Glutamate--tRNA ligase.